The chain runs to 347 residues: uncharacterized protein (347 aa).

This is an uncharacterized protein from Saccharomyces cerevisiae (strain ATCC 204508 / S288c) (Baker's yeast).